Consider the following 1041-residue polypeptide: Importin-9 (1041 aa).

N-acetylalanine is present on Ala-2. Residues 43–119 (AEEQIKVLEV…RELLPNGLRE (77 aa)) enclose the Importin N-terminal domain. Positions 936 to 967 (QATPAEWNQDDSNDMWEDQEEEEEEEEDGLAG) are disordered. A compositionally biased stretch (acidic residues) spans 943–964 (NQDDSNDMWEDQEEEEEEEEDG).

It belongs to the importin beta family. Interacts with histones H2A, H2B, H3 and H4. The binding is coupled to RanGTP cycles. Interacts with AKIRIN2; promoting association with pre-assembled proteasomes. Associates with pre-assembled proteasomes; interaction is indirect and mediated via interaction with AKIRIN2. Interacts with PPP2R1A and PPP2R1B.

It is found in the cytoplasm. Its subcellular location is the nucleus. Its function is as follows. Nuclear transport receptor that mediates nuclear import of proteins, such as histones, proteasome and actin. Serves as receptor for nuclear localization signals (NLS) in cargo substrates. Is thought to mediate docking of the importin/substrate complex to the nuclear pore complex (NPC) through binding to nucleoporin and the complex is subsequently translocated through the pore by an energy requiring, Ran-dependent mechanism. At the nucleoplasmic side of the NPC, Ran binds to the importin, the importin/substrate complex dissociates and importin is re-exported from the nucleus to the cytoplasm where GTP hydrolysis releases Ran. The directionality of nuclear import is thought to be conferred by an asymmetric distribution of the GTP- and GDP-bound forms of Ran between the cytoplasm and nucleus. Mediates the import of pre-assembled proteasomes into the nucleus; AKIRIN2 acts as a molecular bridge between IPO9 and the proteasome complex. Mediates the nuclear import of histones H2A, H2B, H4 and H4. In addition to nuclear import, also acts as a chaperone for histones by preventing inappropriate non-nucleosomal interactions. Mediates the nuclear import of actin. The protein is Importin-9 of Mus musculus (Mouse).